A 565-amino-acid chain; its full sequence is DNA mismatch repair protein MutL (565 aa).

This sequence belongs to the DNA mismatch repair MutL/HexB family.

Its function is as follows. This protein is involved in the repair of mismatches in DNA. It is required for dam-dependent methyl-directed DNA mismatch repair. May act as a 'molecular matchmaker', a protein that promotes the formation of a stable complex between two or more DNA-binding proteins in an ATP-dependent manner without itself being part of a final effector complex. The polypeptide is DNA mismatch repair protein MutL (Desulforudis audaxviator (strain MP104C)).